Consider the following 280-residue polypeptide: Diaminopimelate epimerase (280 aa).

Positions 14 and 67 each coordinate substrate. The active-site Proton donor is the cysteine 76. Substrate contacts are provided by residues glycine 77–asparagine 78, asparagine 193, and glutamate 210–arginine 211. Cysteine 220 (proton acceptor) is an active-site residue. Glycine 221–threonine 222 serves as a coordination point for substrate.

Belongs to the diaminopimelate epimerase family. As to quaternary structure, homodimer.

Its subcellular location is the cytoplasm. It catalyses the reaction (2S,6S)-2,6-diaminopimelate = meso-2,6-diaminopimelate. It functions in the pathway amino-acid biosynthesis; L-lysine biosynthesis via DAP pathway; DL-2,6-diaminopimelate from LL-2,6-diaminopimelate: step 1/1. Catalyzes the stereoinversion of LL-2,6-diaminopimelate (L,L-DAP) to meso-diaminopimelate (meso-DAP), a precursor of L-lysine. This chain is Diaminopimelate epimerase, found in Methanocella arvoryzae (strain DSM 22066 / NBRC 105507 / MRE50).